The primary structure comprises 92 residues: Protein S100-B (92 aa).

N-acetylserine is present on Ser-2. EF-hand domains are found at residues 13–48 (DVFHQYSGREGDKHKLKKSELKELINNELSHFLEEI) and 49–84 (KEQEVVDKVMETLDEDGDGECDFQEFMAFVAMVTTA). Zn(2+) is bound at residue His-16. Ser-19, Glu-22, and Asp-24 together coordinate Ca(2+). Zn(2+) is bound at residue His-26. Ca(2+) contacts are provided by Asp-62, Asp-64, Asp-66, Glu-68, and Glu-73. His-86 and His-91 together coordinate Zn(2+).

The protein belongs to the S-100 family. As to quaternary structure, dimer of either two alpha chains, or two beta chains, or one alpha and one beta chain. The S100B dimer binds two molecules of STK38. Interacts with CACYBP in a calcium-dependent manner. Interacts with ATAD3A; this interaction probably occurs in the cytosol prior to ATAD3A mitochondrial targeting. Interacts with S100A6. The S100B dimer interacts with two molecules of CAPZA1. Interacts with AGER. Interacts with PPP5C (via TPR repeats); the interaction is calcium-dependent and modulates PPP5C activity. Interacts with TPPP; this interaction inhibits TPPP dimerization. Interacts with isoform CLSTN3beta of CLSTN3; interaction promotes secretion.

Its subcellular location is the cytoplasm. It localises to the nucleus. It is found in the secreted. In terms of biological role, small zinc- and- and calcium-binding protein that is highly expressed in astrocytes and constitutes one of the most abundant soluble proteins in brain. Weakly binds calcium but binds zinc very tightly-distinct binding sites with different affinities exist for both ions on each monomer. Physiological concentrations of potassium ion antagonize the binding of both divalent cations, especially affecting high-affinity calcium-binding sites. Acts as a neurotrophic factor that promotes astrocytosis and axonal proliferation. Involved in innervation of thermogenic adipose tissue by acting as an adipocyte-derived neurotrophic factor that promotes sympathetic innervation of adipose tissue. Binds to and initiates the activation of STK38 by releasing autoinhibitory intramolecular interactions within the kinase. Interaction with AGER after myocardial infarction may play a role in myocyte apoptosis by activating ERK1/2 and p53/TP53 signaling. Could assist ATAD3A cytoplasmic processing, preventing aggregation and favoring mitochondrial localization. May mediate calcium-dependent regulation on many physiological processes by interacting with other proteins, such as TPR-containing proteins, and modulating their activity. In Mus musculus (Mouse), this protein is Protein S100-B.